Here is a 451-residue protein sequence, read N- to C-terminus: Phosphoglucosamine mutase (451 aa).

Residue S102 is the Phosphoserine intermediate of the active site. Positions 102, 242, 244, and 246 each coordinate Mg(2+). The residue at position 102 (S102) is a Phosphoserine.

It belongs to the phosphohexose mutase family. The cofactor is Mg(2+). In terms of processing, activated by phosphorylation.

The catalysed reaction is alpha-D-glucosamine 1-phosphate = D-glucosamine 6-phosphate. Catalyzes the conversion of glucosamine-6-phosphate to glucosamine-1-phosphate. The sequence is that of Phosphoglucosamine mutase from Staphylococcus aureus (strain bovine RF122 / ET3-1).